The following is a 225-amino-acid chain: Heptaprenylglyceryl phosphate synthase (225 aa).

K6 is a sn-glycerol 1-phosphate binding site. Mg(2+) contacts are provided by D8 and T34. Sn-glycerol 1-phosphate is bound by residues 153–158 (YIEYSG), G183, and 203–204 (GN).

It belongs to the GGGP/HepGP synthase family. Group I subfamily. As to quaternary structure, homodimer. Requires Mg(2+) as cofactor.

The enzyme catalyses sn-glycerol 1-phosphate + all-trans-heptaprenyl diphosphate = 3-heptaprenyl-sn-glycero-1-phosphate + diphosphate. The protein operates within membrane lipid metabolism; glycerophospholipid metabolism. Prenyltransferase that catalyzes in vivo the transfer of the heptaprenyl moiety of heptaprenyl pyrophosphate (HepPP; 35 carbon atoms) to the C3 hydroxyl of sn-glycerol-1-phosphate (G1P), producing heptaprenylglyceryl phosphate (HepGP). This reaction is an ether-bond-formation step in the biosynthesis of archaea-type G1P-based membrane lipids found in Bacillales. This Listeria welshimeri serovar 6b (strain ATCC 35897 / DSM 20650 / CCUG 15529 / CIP 8149 / NCTC 11857 / SLCC 5334 / V8) protein is Heptaprenylglyceryl phosphate synthase.